Here is a 150-residue protein sequence, read N- to C-terminus: Ribosomal RNA large subunit methyltransferase H (150 aa).

Residues Ala-100 and 118–123 (LSEMTF) each bind S-adenosyl-L-methionine.

It belongs to the RNA methyltransferase RlmH family. Homodimer.

It localises to the cytoplasm. It catalyses the reaction pseudouridine(1915) in 23S rRNA + S-adenosyl-L-methionine = N(3)-methylpseudouridine(1915) in 23S rRNA + S-adenosyl-L-homocysteine + H(+). Its function is as follows. Specifically methylates the pseudouridine at position 1915 (m3Psi1915) in 23S rRNA. The sequence is that of Ribosomal RNA large subunit methyltransferase H from Helicobacter pylori (strain J99 / ATCC 700824) (Campylobacter pylori J99).